The following is a 248-amino-acid chain: Fasciclin-like arabinogalactan protein 19 (248 aa).

The first 29 residues, 1 to 29 (MAKISSASCFRAIFLGALIILCLPHPSTG), serve as a signal peptide directing secretion. One can recognise an FAS1 domain in the interval 35–166 (LERAIAILRV…IAVHGLADLL (132 aa)). N-linked (GlcNAc...) asparagine glycans are attached at residues N114 and N136. Positions 213 to 226 (SPSVEEVSPSPSWG) are enriched in low complexity. The segment at 213–248 (SPSVEEVSPSPSWGEGEEDFIVGDEGGPLDGRNNGF) is disordered.

Belongs to the fasciclin-like AGP family.

It is found in the secreted. May be a cell surface adhesion protein. In Arabidopsis thaliana (Mouse-ear cress), this protein is Fasciclin-like arabinogalactan protein 19 (FLA19).